A 439-amino-acid chain; its full sequence is Oocyte zinc finger protein XlCOF28 (439 aa).

C2H2-type zinc fingers lie at residues 6–28, 34–56, 62–84, 90–112, 118–140, 146–168, 174–196, 202–224, and 230–252; these read YECT…QRTH, FKCT…KKCH, YMCT…IRTH, FTCT…LRIH, HKCN…QRTH, FQCT…LRIH, YKCS…QRTH, FQCS…ERTH, and YKCS…QKTH. 2 disordered regions span residues 246–275 and 285–304; these read KLHQ…APKT and AGLE…ESPE. C2H2-type zinc fingers lie at residues 333 to 355, 361 to 383, 389 to 411, and 417 to 439; these read HKCT…QRTH, FKCS…RKIH, YTCA…RRTH, and YICA…QRIH.

It belongs to the krueppel C2H2-type zinc-finger protein family.

The protein localises to the nucleus. Its function is as follows. May be involved in transcriptional regulation. The polypeptide is Oocyte zinc finger protein XlCOF28 (Xenopus laevis (African clawed frog)).